The primary structure comprises 485 residues: Caspid protein (485 aa).

N-linked (GlcNAc...) asparagine; by host glycans are attached at residues N5 and N178. Residues 236-262 (IALTLFNLADTLLGGLPTELISSAGGQ) form a particle formation region. N430 is a glycosylation site (N-linked (GlcNAc...) asparagine; by host). Positions 453-478 (TTSLGAGPVSISAVAVLAPHSALALL) are oligomerization.

Belongs to the hepevirus capsid protein family. In terms of assembly, self-assembles to form the capsid. The capsid is dominated by dimers that define the 30 morphological units. Interacts with phosphorylated protein ORF3. Interacts with host TMEM134. Interacts with host ASGR1 and ASGR2; these interactions facilitate infection of host hepatocytes. Not N-glycosylated.

Its subcellular location is the virion. It localises to the host cytoplasm. The protein resides in the host endoplasmic reticulum. The protein localises to the host Golgi apparatus. It is found in the host cell surface. Its subcellular location is the host nucleus. Functionally, forms an icosahedral capsid with a T=1 symmetry and a 34 nm diameter. The capsid is composed of 60 copies linked to each other. Binds to the 5' end of the genomic RNA to mediate genome encapsidation. Binds to heparin surface proteoglycans (HSPGs) to mediate viral entry. Additionally, the interactions with host ASGR1 and ASGR2 facilitate viral infection of hepatocytes. Inhibits IFN production by blocking host TBK1-induced IRF3 phosphorylation. The nuclear form probably modulates host gene expression. In Hepatitis E virus (isolate Rhesus/HT-4) (HEV), this protein is Caspid protein.